Here is a 406-residue protein sequence, read N- to C-terminus: HEAT repeat-containing taxis protein OE_2401F (406 aa).

HEAT repeat units follow at residues 7 to 41 (LERSGDVEKLVELLQESEKETVRRRAAEILGNLDE), 42 to 78 (PEPEGIQALVDAMSDDDESVRAAAIDALTQQEAVDAL), 90 to 127 (GATWAQAEAFVENLESETPELRMAAANVLGLLGVEDTA), 153 to 184 (IEQPAVTGILVDCLHGEPLKVRREAAESLGRL), 185 to 215 (TTEQALDGLLSVVEDDSEAMRRTAVSSLGRF), 216 to 252 (ETAEPVDALVERLGDESDLVRRAAVFSLIEILSNVPP), and 370 to 406 (VGGDRSRQRLERLVDETDSEEVRRRAFSAISKLGGKT).

In terms of assembly, interacts with chemotaxis (Che) proteins.

Its function is as follows. Involved in taxis signal transduction. Essential for the ability to control the direction of flagellar rotation. May have a role between CheY and the flagellum. The chain is HEAT repeat-containing taxis protein OE_2401F from Halobacterium salinarum (strain ATCC 29341 / DSM 671 / R1).